The chain runs to 213 residues: Adenylyl-sulfate kinase (213 aa).

A compositionally biased stretch (basic and acidic residues) spans 1–17; the sequence is MPAHQLDDHNQETRSDD. Residues 1 to 20 are disordered; sequence MPAHQLDDHNQETRSDDENI. ATP is bound at residue 47–54; sequence GLSGSGKS. Catalysis depends on S121, which acts as the Phosphoserine intermediate.

This sequence belongs to the APS kinase family.

The catalysed reaction is adenosine 5'-phosphosulfate + ATP = 3'-phosphoadenylyl sulfate + ADP + H(+). The protein operates within sulfur metabolism; hydrogen sulfide biosynthesis; sulfite from sulfate: step 2/3. Functionally, catalyzes the synthesis of activated sulfate. This is Adenylyl-sulfate kinase from Yersinia pestis.